The primary structure comprises 105 residues: MAPIKTQESINQKLALVVKSGKFTLGYKSTIKSLRQGKSKLIIIAANTPVLRKSELEYYAMLSKTKVYYFQGGNNELGTAVGKLFRVGVVSVLDAGDSDILTALA.

This sequence belongs to the eukaryotic ribosomal protein eL30 family.

The chain is Large ribosomal subunit protein eL30 (RPL30) from Candida glabrata (strain ATCC 2001 / BCRC 20586 / JCM 3761 / NBRC 0622 / NRRL Y-65 / CBS 138) (Yeast).